A 76-amino-acid chain; its full sequence is UPF0729 protein C18orf32 homolog (76 aa).

The tract at residues 1–37 is necessary for its localzation to the endoplasmic reticulum and lipid droplets; it reads MVCIPCIVIPVLLWVYKKFLEPYIYPLISPFVSRMWP. A compositionally biased stretch (basic and acidic residues) spans 47-56; that stretch reads KNKGKVDYKG. Positions 47-76 are disordered; it reads KNKGKVDYKGADINGLPTRGPTEMCDKKKD.

It belongs to the UPF0729 family. As to quaternary structure, interacts with DERL1 and AMFR. In terms of processing, undergoes ER-associated degradation (ERAD).

The protein localises to the endoplasmic reticulum. It is found in the lipid droplet. In terms of biological role, may activate the NF-kappa-B signaling pathway. This Bos taurus (Bovine) protein is UPF0729 protein C18orf32 homolog.